The chain runs to 291 residues: Pantothenate synthetase (291 aa).

30–37 contributes to the ATP binding site; it reads MGYLHVGH. The Proton donor role is filled by His37. Gln61 serves as a coordination point for (R)-pantoate. Gln61 provides a ligand contact to beta-alanine. Residue 147–150 participates in ATP binding; the sequence is GEKD. Gln153 contributes to the (R)-pantoate binding site. Residues Val176 and 184–187 each bind ATP; that span reads CSSR.

Belongs to the pantothenate synthetase family. In terms of assembly, homodimer.

Its subcellular location is the cytoplasm. The enzyme catalyses (R)-pantoate + beta-alanine + ATP = (R)-pantothenate + AMP + diphosphate + H(+). It functions in the pathway cofactor biosynthesis; (R)-pantothenate biosynthesis; (R)-pantothenate from (R)-pantoate and beta-alanine: step 1/1. Its function is as follows. Catalyzes the condensation of pantoate with beta-alanine in an ATP-dependent reaction via a pantoyl-adenylate intermediate. This chain is Pantothenate synthetase, found in Rhizobium meliloti (strain 1021) (Ensifer meliloti).